An 882-amino-acid polypeptide reads, in one-letter code: Bifunctional heparan sulfate N-deacetylase/N-sulfotransferase 1 (882 aa).

Topologically, residues 1–17 (MPALACLRRLCRHVSPQ) are cytoplasmic. Residues 1–169 (MPALACLRRL…VAYGVGIIGF (169 aa)) are sufficient for localization to Golgi membrane. The helical; Signal-anchor for type II membrane protein transmembrane segment at 18–39 (AVLFLLFIFCLFSVFISAYYLY) threads the bilayer. The interval 40 to 598 (GWKRGLEPSA…KRHKDIWSKE (559 aa)) is heparan sulfate N-deacetylase 1. Over 40 to 882 (GWKRGLEPSA…WLREDLQNTR (843 aa)) the chain is Lumenal. N231, N351, and N401 each carry an N-linked (GlcNAc...) asparagine glycan. A heparan sulfate N-sulfotransferase 1 region spans residues 599–882 (KTCDRFPKLL…WLREDLQNTR (284 aa)). The active-site For sulfotransferase activity is the K614. 614-618 (KTGTT) lines the adenosine 3',5'-bisphosphate pocket. N-linked (GlcNAc...) asparagine glycosylation is present at N667. Adenosine 3',5'-bisphosphate is bound by residues S712 and W817. A disulfide bridge connects residues C818 and C828. 833–837 (KGRKY) contacts adenosine 3',5'-bisphosphate.

It belongs to the sulfotransferase 1 family. NDST subfamily. Monomer. In terms of assembly, interacts with heparan sulfate co-polymerase subunits EXT1 and EXT2. Interacts with NDST1 isoform 3. As to quaternary structure, interacts with heparan sulfate co-polymerase subunits EXT1 and EXT2. Interacts with NDST1 isoform 1. As to expression, widely expressed. Expression is most abundant in heart, liver and pancreas.

It is found in the golgi apparatus. The protein localises to the trans-Golgi network membrane. Its subcellular location is the cis-Golgi network membrane. It carries out the reaction N-acetyl-alpha-D-glucosaminyl-[heparan sulfate](n) + H2O = alpha-D-glucosaminyl-[heparan sulfate](n) + acetate. The catalysed reaction is alpha-D-glucosaminyl-[heparan sulfate](n) + 3'-phosphoadenylyl sulfate = N-sulfo-alpha-D-glucosaminyl-[heparan sulfate](n) + adenosine 3',5'-bisphosphate + 2 H(+). Its pathway is glycan metabolism; heparan sulfate biosynthesis. It functions in the pathway glycan metabolism; heparin biosynthesis. Its function is as follows. Essential bifunctional enzyme that catalyzes both the N-deacetylation and the N-sulfation of glucosamine (GlcNAc) of the glycosaminoglycan in heparan sulfate. Modifies the GlcNAc-GlcA disaccharide repeating sugar backbone to make N-sulfated heparosan, a prerequisite substrate for later modifications in heparin biosynthesis. Plays a role in determining the extent and pattern of sulfation of heparan sulfate. Participates in biosynthesis of heparan sulfate that can ultimately serve as L-selectin ligands, thereby playing a role in inflammatory response. Required for the exosomal release of SDCBP, CD63 and syndecan. In terms of biological role, lacks both N-deacetylase and N-sulfotransferase activities. Acts as a dominant negative on isoform 1, likely by changing the composition of enzyme complexes responsible for elongation and modification of heparan sulfates. This chain is Bifunctional heparan sulfate N-deacetylase/N-sulfotransferase 1, found in Homo sapiens (Human).